Consider the following 392-residue polypeptide: Phosphoglycerate kinase (392 aa).

Substrate is bound by residues 21–23 (DLN), Arg-36, 59–62 (HLGR), Arg-113, and Arg-146. ATP-binding positions include Lys-197, Glu-319, and 345–348 (GGDT).

This sequence belongs to the phosphoglycerate kinase family. In terms of assembly, monomer.

Its subcellular location is the cytoplasm. It catalyses the reaction (2R)-3-phosphoglycerate + ATP = (2R)-3-phospho-glyceroyl phosphate + ADP. The protein operates within carbohydrate degradation; glycolysis; pyruvate from D-glyceraldehyde 3-phosphate: step 2/5. The sequence is that of Phosphoglycerate kinase from Thioalkalivibrio sulfidiphilus (strain HL-EbGR7).